A 150-amino-acid chain; its full sequence is Small ribosomal subunit protein eS6 (150 aa).

Belongs to the eukaryotic ribosomal protein eS6 family.

In Caldivirga maquilingensis (strain ATCC 700844 / DSM 13496 / JCM 10307 / IC-167), this protein is Small ribosomal subunit protein eS6.